The sequence spans 109 residues: Aquaporin-2 (109 aa).

Topologically, residues 1-6 are cytoplasmic; the sequence is SIAFSR. Residues 7 to 27 form a helical membrane-spanning segment; the sequence is AVLSEFLATLLFVFFGLGSAL. Residues 28–35 lie on the Extracellular side of the membrane; it reads NWPQALPS. Residues 36 to 54 form a helical membrane-spanning segment; that stretch reads VLQIAMAFGLAIGTLVQTL. At 55 to 59 the chain is on the cytoplasmic side; that stretch reads GHISG. Residues 60 to 69 constitute an intramembrane region (discontinuously helical); sequence AHINPAVTIA. An NPA 1 motif is present at residues 63 to 65; the sequence is NPA. Residues 70–80 are Cytoplasmic-facing; that stretch reads CLVGCHVSFLR. Residues 81–102 form a helical membrane-spanning segment; the sequence is ALFYLAAQLLGAVAGAALLHEL. Topologically, residues 103–109 are extracellular; the sequence is TPPDIRG.

It belongs to the MIP/aquaporin (TC 1.A.8) family. In terms of assembly, homotetramer. Serine phosphorylation is necessary and sufficient for expression at the apical membrane. Endocytosis is not phosphorylation-dependent. In terms of processing, N-glycosylated.

It localises to the apical cell membrane. The protein resides in the basolateral cell membrane. Its subcellular location is the cell membrane. It is found in the cytoplasmic vesicle membrane. The protein localises to the golgi apparatus. It localises to the trans-Golgi network membrane. The enzyme catalyses H2O(in) = H2O(out). It carries out the reaction glycerol(in) = glycerol(out). Its function is as follows. Forms a water-specific channel that provides the plasma membranes of renal collecting duct with high permeability to water, thereby permitting water to move in the direction of an osmotic gradient. Plays an essential role in renal water homeostasis. Could also be permeable to glycerol. In Procavia capensis habessinica (Abyssinian hyrax), this protein is Aquaporin-2.